The primary structure comprises 143 residues: NADH-quinone oxidoreductase subunit A (143 aa).

3 consecutive transmembrane segments (helical) span residues G7–L27, F63–W83, and F93–W113.

Belongs to the complex I subunit 3 family. As to quaternary structure, NDH-1 is composed of 14 different subunits. Subunits NuoA, H, J, K, L, M, N constitute the membrane sector of the complex.

The protein resides in the cell inner membrane. It catalyses the reaction a quinone + NADH + 5 H(+)(in) = a quinol + NAD(+) + 4 H(+)(out). In terms of biological role, NDH-1 shuttles electrons from NADH, via FMN and iron-sulfur (Fe-S) centers, to quinones in the respiratory chain. The immediate electron acceptor for the enzyme in this species is believed to be a menaquinone. Couples the redox reaction to proton translocation (for every two electrons transferred, four hydrogen ions are translocated across the cytoplasmic membrane), and thus conserves the redox energy in a proton gradient. The protein is NADH-quinone oxidoreductase subunit A of Chlorobium limicola (strain DSM 245 / NBRC 103803 / 6330).